The sequence spans 151 residues: Ribosome maturation factor RimP (151 aa).

The protein belongs to the RimP family.

Its subcellular location is the cytoplasm. Required for maturation of 30S ribosomal subunits. The polypeptide is Ribosome maturation factor RimP (Mannheimia succiniciproducens (strain KCTC 0769BP / MBEL55E)).